Reading from the N-terminus, the 181-residue chain is Ribonuclease M5 (181 aa).

The 84-residue stretch at 5–88 (KEIIVVEGKD…IKHAYLNTKD (84 aa)) folds into the Toprim domain. The Mg(2+) site is built by Glu11, Asp57, and Asp59.

The protein belongs to the ribonuclease M5 family. Mg(2+) is required as a cofactor.

It is found in the cytoplasm. The enzyme catalyses Endonucleolytic cleavage of RNA, removing 21 and 42 nucleotides, respectively, from the 5'- and 3'-termini of a 5S-rRNA precursor.. Functionally, required for correct processing of both the 5' and 3' ends of 5S rRNA precursor. Cleaves both sides of a double-stranded region yielding mature 5S rRNA in one step. In Borreliella burgdorferi (strain ATCC 35210 / DSM 4680 / CIP 102532 / B31) (Borrelia burgdorferi), this protein is Ribonuclease M5.